The primary structure comprises 328 residues: tRNA dimethylallyltransferase (328 aa).

Residue 25–32 (GPTAVGKT) coordinates ATP. 27–32 (TAVGKT) lines the substrate pocket. The interval 50–53 (DSMQ) is interaction with substrate tRNA.

Belongs to the IPP transferase family. Monomer. The cofactor is Mg(2+).

The enzyme catalyses adenosine(37) in tRNA + dimethylallyl diphosphate = N(6)-dimethylallyladenosine(37) in tRNA + diphosphate. Its function is as follows. Catalyzes the transfer of a dimethylallyl group onto the adenine at position 37 in tRNAs that read codons beginning with uridine, leading to the formation of N6-(dimethylallyl)adenosine (i(6)A). In Halothermothrix orenii (strain H 168 / OCM 544 / DSM 9562), this protein is tRNA dimethylallyltransferase.